Consider the following 224-residue polypeptide: Transcription cofactor HES-6 (224 aa).

Residues 1-31 (MAPSQAPSRDRAGQEDEDRWEARGDRKARKP) are disordered. A compositionally biased stretch (basic and acidic residues) spans 8 to 25 (SRDRAGQEDEDRWEARGD). The region spanning 25–77 (DRKARKPLVEKKRRARINESLQELRLLLAGTEVQAKLENAEVLELTVRRVQGA) is the bHLH domain. Residues 96–129 (FAAGYIQCMHEVHTFVSTCQAIDATVSAELLNHL) form the Orange domain. The tract at residues 146 to 209 (GDSLAGLPGG…GPDLVSTSLG (64 aa)) is disordered. A compositionally biased stretch (low complexity) spans 158-171 (RSSWPPGGSPESPL). The span at 181–190 (LCSDLEEIPE) shows a compositional bias: acidic residues. The WRPW motif signature appears at 221 to 224 (WRPW).

As to quaternary structure, transcription repression requires formation of a complex with a corepressor protein of the Groucho/TLE family. Interacts with HES1. In terms of tissue distribution, expressed in both undifferentiated and differentiated cells. High levels of expression are observed in several embryonic tissues including the nervous system, muscle and thymus. In the nervous system, initially expressed in the closing neural tube, then in the spinal cord, cranial and dorsal root ganglia, and brain neuroepithelium. Also expressed in epithelial cells of the embryonic respiratory, urinary and digestive systems. In the limb buds, expressed in skeletal muscle and presumptive tendons.

Its subcellular location is the nucleus. In terms of biological role, does not bind DNA itself but suppresses both HES1-mediated N box-dependent transcriptional repression and binding of HES1 to E box sequences. Also suppresses HES1-mediated inhibition of the heterodimer formed by ASCL1/MASH1 and TCF3/E47, allowing ASCL1 and TCF3 to up-regulate transcription in its presence. Promotes cell differentiation. In Mus musculus (Mouse), this protein is Transcription cofactor HES-6.